The following is a 236-amino-acid chain: Purine nucleoside phosphorylase DeoD-type (236 aa).

Residue His5 coordinates a purine D-ribonucleoside. Residues Gly21, Arg25, Arg44, and 88-91 (RVGT) contribute to the phosphate site. A purine D-ribonucleoside-binding positions include 180-182 (DME) and 204-205 (SD). Catalysis depends on Asp205, which acts as the Proton donor.

It belongs to the PNP/UDP phosphorylase family. As to quaternary structure, homohexamer; trimer of homodimers.

It catalyses the reaction a purine D-ribonucleoside + phosphate = a purine nucleobase + alpha-D-ribose 1-phosphate. The enzyme catalyses a purine 2'-deoxy-D-ribonucleoside + phosphate = a purine nucleobase + 2-deoxy-alpha-D-ribose 1-phosphate. Catalyzes the reversible phosphorolytic breakdown of the N-glycosidic bond in the beta-(deoxy)ribonucleoside molecules, with the formation of the corresponding free purine bases and pentose-1-phosphate. The protein is Purine nucleoside phosphorylase DeoD-type of Buchnera aphidicola subsp. Schizaphis graminum (strain Sg).